Reading from the N-terminus, the 217-residue chain is Small ribosomal subunit protein uS3c (217 aa).

The KH type-2 domain maps to 46–117; that stretch reads VQKHIKNSSN…RLRMTLIEIA (72 aa).

Belongs to the universal ribosomal protein uS3 family. Part of the 30S ribosomal subunit.

It localises to the plastid. Its subcellular location is the chloroplast. This Marchantia polymorpha (Common liverwort) protein is Small ribosomal subunit protein uS3c (rps3).